A 167-amino-acid polypeptide reads, in one-letter code: tRNA-specific adenosine deaminase (167 aa).

Positions 6 to 117 constitute a CMP/dCMP-type deaminase domain; it reads FSHEYWMRHA…DAKTGAAGSL (112 aa). H57 lines the Zn(2+) pocket. E59 serves as the catalytic Proton donor. Residues C87 and C90 each coordinate Zn(2+).

The protein belongs to the cytidine and deoxycytidylate deaminase family. Homodimer. The cofactor is Zn(2+).

It catalyses the reaction adenosine(34) in tRNA + H2O + H(+) = inosine(34) in tRNA + NH4(+). Catalyzes the deamination of adenosine to inosine at the wobble position 34 of tRNA(Arg2). This Escherichia coli O157:H7 protein is tRNA-specific adenosine deaminase.